We begin with the raw amino-acid sequence, 145 residues long: uncharacterized protein (145 aa).

The CBM3 domain occupies 1 to 145 (LQYRAADTNA…NGQIVWGTAP (145 aa)).

This is an uncharacterized protein from Paenibacillus lautus (Bacillus lautus).